A 240-amino-acid chain; its full sequence is Phosphoenolpyruvate guanylyltransferase (240 aa).

Phosphoenolpyruvate contacts are provided by threonine 161, glycine 178, and serine 181.

The protein belongs to the CofC family.

It catalyses the reaction phosphoenolpyruvate + GTP + H(+) = enolpyruvoyl-2-diphospho-5'-guanosine + diphosphate. It functions in the pathway cofactor biosynthesis; coenzyme F420 biosynthesis. In terms of biological role, guanylyltransferase that catalyzes the activation of phosphoenolpyruvate (PEP) as enolpyruvoyl-2-diphospho-5'-guanosine, via the condensation of PEP with GTP. It is involved in the biosynthesis of coenzyme F420, a hydride carrier cofactor. The protein is Phosphoenolpyruvate guanylyltransferase of Rhodococcus opacus (strain B4).